Reading from the N-terminus, the 230-residue chain is Cytidylate kinase (230 aa).

12–20 (GPSGAGKGT) provides a ligand contact to ATP.

The protein belongs to the cytidylate kinase family. Type 1 subfamily.

It is found in the cytoplasm. It carries out the reaction CMP + ATP = CDP + ADP. It catalyses the reaction dCMP + ATP = dCDP + ADP. The sequence is that of Cytidylate kinase from Shewanella sp. (strain MR-7).